The chain runs to 253 residues: Indole-3-glycerol phosphate synthase (253 aa).

Belongs to the TrpC family.

It carries out the reaction 1-(2-carboxyphenylamino)-1-deoxy-D-ribulose 5-phosphate + H(+) = (1S,2R)-1-C-(indol-3-yl)glycerol 3-phosphate + CO2 + H2O. Its pathway is amino-acid biosynthesis; L-tryptophan biosynthesis; L-tryptophan from chorismate: step 4/5. This chain is Indole-3-glycerol phosphate synthase, found in Bacillus thuringiensis subsp. konkukian (strain 97-27).